A 431-amino-acid chain; its full sequence is Probable carboxylic ester hydrolase LipM (431 aa).

Helical transmembrane passes span 7 to 27 (IHVI…AATI), 38 to 58 (FASL…LPTL), and 75 to 95 (PVRA…LNLS). Catalysis depends on residues S261, D357, and H390.

This sequence belongs to the 'GDXG' lipolytic enzyme family.

The protein localises to the membrane. The protein is Probable carboxylic ester hydrolase LipM of Mycobacterium tuberculosis (strain ATCC 25618 / H37Rv).